The following is a 91-amino-acid chain: Methanol dehydrogenase [cytochrome c] subunit 2 (91 aa).

Positions 1 to 22 are cleaved as a signal peptide; that stretch reads MKHVLTLLALASVFAVSNQALA. An intrachain disulfide couples C28 to C34.

The protein belongs to the methanol dehydrogenase subunit 2 family. As to quaternary structure, heterotetramer composed of 2 alpha and 2 beta subunits.

The protein resides in the cell inner membrane. It catalyses the reaction 2 Fe(III)-[cytochrome cL] + a primary alcohol = 2 Fe(II)-[cytochrome cL] + an aldehyde + 2 H(+). Functionally, catalyzes the oxidation of primary alcohols including methanol. The polypeptide is Methanol dehydrogenase [cytochrome c] subunit 2 (moxI) (Methylophilus methylotrophus (Bacterium W3A1)).